The chain runs to 257 residues: Leucine-rich repeat-containing protein 3 (257 aa).

Positions 1–32 are cleaved as a signal peptide; that stretch reads MGTVRPPRPSLLLVSTRESCLFLLFCLHLGAA. Residues 33-64 enclose the LRRNT domain; sequence CPQPCRCPDHAGAVAVFCSLRGLQEVPEDIPA. LRR repeat units follow at residues 65–86, 89–110, 114–135, and 136–157; these read NTVLLKLDANKISHLPDGAFQH, RLRELDLSHNAIEAIGSATFAG, GLRLLDLSYNRIQRIPKDALGK, and LSAKIRLSHNPLHCECALQEAL. A helical transmembrane segment spans residues 205 to 225; sequence VAMLVTMFGWFAMVIAYVVYY.

It belongs to the LRRC3 family. As to expression, widely expressed; detected in testis, lung, small intestine, breast, brain, heart, bone marrow, placenta, colon, fetal brain, liver, fetal liver, thymus, salivary gland, spinal cord, spleen, trachea and adrenal gland.

The protein localises to the membrane. This chain is Leucine-rich repeat-containing protein 3 (LRRC3), found in Homo sapiens (Human).